The chain runs to 476 residues: Eukaryotic translation initiation factor 3 subunit L (476 aa).

The PCI domain maps to 257-452; that stretch reads DAIRMFSHIL…DLDYALENDL (196 aa).

This sequence belongs to the eIF-3 subunit L family. Component of the eukaryotic translation initiation factor 3 (eIF-3) complex.

The protein resides in the cytoplasm. Component of the eukaryotic translation initiation factor 3 (eIF-3) complex, which is involved in protein synthesis of a specialized repertoire of mRNAs and, together with other initiation factors, stimulates binding of mRNA and methionyl-tRNAi to the 40S ribosome. The eIF-3 complex specifically targets and initiates translation of a subset of mRNAs involved in cell proliferation. In Neosartorya fischeri (strain ATCC 1020 / DSM 3700 / CBS 544.65 / FGSC A1164 / JCM 1740 / NRRL 181 / WB 181) (Aspergillus fischerianus), this protein is Eukaryotic translation initiation factor 3 subunit L.